The sequence spans 229 residues: MTDFHDKPNIQIMFDSLAPTYDKINGILSLGLHIAWNNALVSLLGETNHLLDLCAGTGRVALSYVQNYPRASATLVDFSTKMLENVQKRHPSAPFSYITSDVTHLPLPDNTFRLASMAYGLRNLSYPLEALREVYRVLQPGGHLGILELTRPATYNPVYLLHKLYLNLVVPSVGRFYSGNSYAYSYLKESIRDLPRDAALEAIFHAAHLRPIRKRKLLFGTATIWILEK.

S-adenosyl-L-methionine contacts are provided by residues threonine 57, aspartate 77, and 101 to 102; that span reads DV.

This sequence belongs to the class I-like SAM-binding methyltransferase superfamily. MenG/UbiE family.

It catalyses the reaction a 2-demethylmenaquinol + S-adenosyl-L-methionine = a menaquinol + S-adenosyl-L-homocysteine + H(+). The protein operates within quinol/quinone metabolism; menaquinone biosynthesis; menaquinol from 1,4-dihydroxy-2-naphthoate: step 2/2. Methyltransferase required for the conversion of demethylmenaquinol (DMKH2) to menaquinol (MKH2). The polypeptide is Demethylmenaquinone methyltransferase (Chlamydia trachomatis serovar L2 (strain ATCC VR-902B / DSM 19102 / 434/Bu)).